The primary structure comprises 528 residues: Tyrosine--tRNA ligase, cytoplasmic (528 aa).

An N-acetylmethionine modification is found at Met1. Gly2 is subject to N-acetylglycine; in Tyrosine--tRNA ligase, cytoplasmic, N-terminally processed. Tyr39 serves as a coordination point for L-tyrosine. Tyr39 contacts trans-resveratrol. The short motif at 44-52 is the 'HIGH' region element; sequence TTGKPHVAY. 4 residues coordinate L-tyrosine: Tyr166, Gln170, Asp173, and Gln188. Positions 170 and 173 each coordinate trans-resveratrol. Residue Lys197 is modified to N6-acetyllysine. Phosphoserine is present on Ser205. Lys206 is subject to N6-acetyllysine. A 'KMSKS' region motif is present at residues 222–226; the sequence is KMSSS. Positions 242-247 match the Nuclear localization signal motif; sequence KKKLKK. The interval 339–363 is disordered; that stretch reads AAYPDPSKQKPMAKGPAKNSEPEEV. The 105-residue stretch at 364-468 folds into the tRNA-binding domain; it reads IPSRLDIRVG…AGSAPGEHVF (105 aa). Position 386 is a phosphoserine (Ser386). Lys474, Lys482, and Lys490 each carry N6-acetyllysine.

It belongs to the class-I aminoacyl-tRNA synthetase family. In terms of assembly, homodimer. Interacts (when binding to resveratrol) with PARP1; interaction stimulates the poly-ADP-ribosyltransferase activity of PARP1.

It localises to the cytoplasm. Its subcellular location is the nucleus. The enzyme catalyses tRNA(Tyr) + L-tyrosine + ATP = L-tyrosyl-tRNA(Tyr) + AMP + diphosphate + H(+). With respect to regulation, resveratrol strongly inhibits the tyrosine--tRNA ligase activity. Functionally, tyrosine--tRNA ligase that catalyzes the attachment of tyrosine to tRNA(Tyr) in a two-step reaction: tyrosine is first activated by ATP to form Tyr-AMP and then transferred to the acceptor end of tRNA(Tyr). Also acts as a positive regulator of poly-ADP-ribosylation in the nucleus, independently of its tyrosine--tRNA ligase activity. Activity is switched upon resveratrol-binding: resveratrol strongly inhibits the tyrosine--tRNA ligase activity and promotes relocalization to the nucleus, where YARS1 specifically stimulates the poly-ADP-ribosyltransferase activity of PARP1. In Homo sapiens (Human), this protein is Tyrosine--tRNA ligase, cytoplasmic.